A 224-amino-acid chain; its full sequence is Ribonuclease 3 (224 aa).

The RNase III domain maps to Ile-4–Gly-127. Glu-40 provides a ligand contact to Mg(2+). The active site involves Asp-44. The Mg(2+) site is built by Asp-113 and Glu-116. Glu-116 is a catalytic residue. One can recognise a DRBM domain in the interval Asp-154–Ala-223.

Belongs to the ribonuclease III family. As to quaternary structure, homodimer. Mg(2+) is required as a cofactor.

It localises to the cytoplasm. The catalysed reaction is Endonucleolytic cleavage to 5'-phosphomonoester.. Its function is as follows. Digests double-stranded RNA. Involved in the processing of primary rRNA transcript to yield the immediate precursors to the large and small rRNAs (23S and 16S). Processes some mRNAs, and tRNAs when they are encoded in the rRNA operon. Processes pre-crRNA and tracrRNA of type II CRISPR loci if present in the organism. The protein is Ribonuclease 3 of Campylobacter jejuni subsp. jejuni serotype O:6 (strain 81116 / NCTC 11828).